The following is a 201-amino-acid chain: FMN-dependent NADH:quinone oxidoreductase (201 aa).

Residues Ser-10, 16 to 18 (SQS), 96 to 99 (MYNF), and 140 to 143 (SRGG) contribute to the FMN site.

This sequence belongs to the azoreductase type 1 family. In terms of assembly, homodimer. The cofactor is FMN.

It carries out the reaction 2 a quinone + NADH + H(+) = 2 a 1,4-benzosemiquinone + NAD(+). The catalysed reaction is N,N-dimethyl-1,4-phenylenediamine + anthranilate + 2 NAD(+) = 2-(4-dimethylaminophenyl)diazenylbenzoate + 2 NADH + 2 H(+). In terms of biological role, quinone reductase that provides resistance to thiol-specific stress caused by electrophilic quinones. Also exhibits azoreductase activity. Catalyzes the reductive cleavage of the azo bond in aromatic azo compounds to the corresponding amines. The protein is FMN-dependent NADH:quinone oxidoreductase of Shigella boydii serotype 4 (strain Sb227).